The sequence spans 101 residues: Interleukin-8 (101 aa).

A signal peptide spans 1 to 22 (MNSKLAVALLATFLLSLTLCEA). Position 27 is a citrulline (R27). 2 cysteine pairs are disulfide-bonded: C34–C61 and C36–C77.

It belongs to the intercrine alpha (chemokine CxC) family. As to quaternary structure, homodimer. Interacts with TNFAIP6 (via Link domain); this interaction interferes with chemokine binding to glycosaminoglycans. Post-translationally, citrullination at Arg-27 prevents proteolysis, and dampens tissue inflammation, it also enhances leukocytosis, possibly through impaired chemokine clearance from the blood circulation.

It is found in the secreted. Chemotactic factor that mediates inflammatory response by attracting neutrophils, basophils, and T-cells to clear pathogens and protect the host from infection. Also plays an important role in neutrophil activation. Released in response to an inflammatory stimulus, exerts its effect by binding to the G-protein-coupled receptors CXCR1 and CXCR2, primarily found in neutrophils, monocytes and endothelial cells. G-protein heterotrimer (alpha, beta, gamma subunits) constitutively binds to CXCR1/CXCR2 receptor and activation by IL8 leads to beta and gamma subunits release from Galpha (GNAI2 in neutrophils) and activation of several downstream signaling pathways including PI3K and MAPK pathways. The polypeptide is Interleukin-8 (CXCL8) (Oryctolagus cuniculus (Rabbit)).